Reading from the N-terminus, the 318-residue chain is NADH-ubiquinone oxidoreductase chain 1 (318 aa).

8 helical membrane-spanning segments follow: residues 2 to 22 (FMIN…FLTL), 70 to 90 (MFII…IPLP), 100 to 120 (LGIL…LWSG), 147 to 167 (AIIL…TLII), 171 to 191 (YLWL…STLA), 217 to 237 (AGPF…MNIF), 254 to 276 (LYSI…IRAS), and 294 to 314 (LPLT…LSSI).

The protein belongs to the complex I subunit 1 family. Core subunit of respiratory chain NADH dehydrogenase (Complex I) which is composed of 45 different subunits.

It localises to the mitochondrion inner membrane. It carries out the reaction a ubiquinone + NADH + 5 H(+)(in) = a ubiquinol + NAD(+) + 4 H(+)(out). Functionally, core subunit of the mitochondrial membrane respiratory chain NADH dehydrogenase (Complex I) which catalyzes electron transfer from NADH through the respiratory chain, using ubiquinone as an electron acceptor. Essential for the catalytic activity and assembly of complex I. This is NADH-ubiquinone oxidoreductase chain 1 (MT-ND1) from Equus asinus (Donkey).